A 458-amino-acid chain; its full sequence is Divalent metal cation transporter MntH (458 aa).

11 helical membrane-spanning segments follow: residues 38-58, 76-96, 119-139, 151-171, 180-200, 223-243, 275-295, 315-335, 370-390, 393-413, and 437-457; these read GFWKTLAAYTGPGILVAVGYM, SLLSVILISSLIAMLLQAMAA, GGFLWVITELAIMATDIAEII, MPLIVGIIITTADVLILLLLM, AVVATLVLVILLVFAYEVILA, MLYLSLGIVGATVMPHDLFLG, LTMAFIVNSLLLILGAALFFG, IVGAIASPMLSMLFAVALLAS, LMSVTPVLIFAIYYHGNEAKI, LLTFSQVFLSIALPFAVIPLV, and FISGVLIILNLYLIAQTLGFV.

Belongs to the NRAMP family.

It is found in the cell membrane. In terms of biological role, h(+)-stimulated, divalent metal cation uptake system. The protein is Divalent metal cation transporter MntH of Lacticaseibacillus paracasei (strain ATCC 334 / BCRC 17002 / CCUG 31169 / CIP 107868 / KCTC 3260 / NRRL B-441) (Lactobacillus paracasei).